The primary structure comprises 153 residues: Aspartate carbamoyltransferase regulatory chain (153 aa).

Residues C110, C115, C138, and C141 each contribute to the Zn(2+) site.

The protein belongs to the PyrI family. Contains catalytic and regulatory chains. Zn(2+) is required as a cofactor.

Its function is as follows. Involved in allosteric regulation of aspartate carbamoyltransferase. This Bacteroides fragilis (strain ATCC 25285 / DSM 2151 / CCUG 4856 / JCM 11019 / LMG 10263 / NCTC 9343 / Onslow / VPI 2553 / EN-2) protein is Aspartate carbamoyltransferase regulatory chain.